A 194-amino-acid chain; its full sequence is Phosphoheptose isomerase (194 aa).

One can recognise an SIS domain in the interval 34–188 (LANIFTKGKK…IEGVERIMFP (155 aa)). 49 to 51 (NGG) lines the substrate pocket. Positions 58 and 62 each coordinate Zn(2+). Substrate contacts are provided by residues Glu62, 90-91 (ND), 116-118 (STS), Ser121, and Gln168. The Zn(2+) site is built by Gln168 and His176.

It belongs to the SIS family. GmhA subfamily. Zn(2+) is required as a cofactor.

It is found in the cytoplasm. It catalyses the reaction 2 D-sedoheptulose 7-phosphate = D-glycero-alpha-D-manno-heptose 7-phosphate + D-glycero-beta-D-manno-heptose 7-phosphate. It functions in the pathway carbohydrate biosynthesis; D-glycero-D-manno-heptose 7-phosphate biosynthesis; D-glycero-alpha-D-manno-heptose 7-phosphate and D-glycero-beta-D-manno-heptose 7-phosphate from sedoheptulose 7-phosphate: step 1/1. Functionally, catalyzes the isomerization of sedoheptulose 7-phosphate in D-glycero-D-manno-heptose 7-phosphate. This chain is Phosphoheptose isomerase, found in Fusobacterium nucleatum subsp. nucleatum (strain ATCC 25586 / DSM 15643 / BCRC 10681 / CIP 101130 / JCM 8532 / KCTC 2640 / LMG 13131 / VPI 4355).